The sequence spans 291 residues: Quinol oxidase subunit 2 (291 aa).

Positions 1-28 (MQLKKAFWKLASLLPLSLLLFLGGCDKK) are cleaved as a signal peptide. A run of 2 helical transmembrane segments spans residues 49 to 69 (SFLLMSLIIAIVFILFTVILI) and 91 to 111 (LEIIWTLVPVIIVIALSIPTV).

The protein belongs to the cytochrome c oxidase subunit 2 family.

It localises to the cell membrane. It catalyses the reaction 2 a quinol + O2 = 2 a quinone + 2 H2O. In terms of biological role, catalyzes quinol oxidation with the concomitant reduction of oxygen to water. Subunit II transfers the electrons from a quinol to the binuclear center of the catalytic subunit I. The chain is Quinol oxidase subunit 2 from Bacillus anthracis.